Consider the following 546-residue polypeptide: Chaperonin GroEL 1 (546 aa).

ATP contacts are provided by residues 30-33 (TLGP), Lys-51, 87-91 (DGTTT), Gly-415, 479-481 (NAA), and Asp-495. The interval 526 to 546 (KEDAPMPGGMPGGMGGMGMDM) is disordered. Over residues 534–546 (GMPGGMGGMGMDM) the composition is skewed to gly residues.

This sequence belongs to the chaperonin (HSP60) family. Forms a cylinder of 14 subunits composed of two heptameric rings stacked back-to-back. Interacts with the co-chaperonin GroES.

It is found in the cytoplasm. The enzyme catalyses ATP + H2O + a folded polypeptide = ADP + phosphate + an unfolded polypeptide.. Together with its co-chaperonin GroES, plays an essential role in assisting protein folding. The GroEL-GroES system forms a nano-cage that allows encapsulation of the non-native substrate proteins and provides a physical environment optimized to promote and accelerate protein folding. The sequence is that of Chaperonin GroEL 1 from Burkholderia vietnamiensis (strain G4 / LMG 22486) (Burkholderia cepacia (strain R1808)).